A 192-amino-acid chain; its full sequence is Riboflavin kinase (192 aa).

Mg(2+) is bound by residues T47 and N49. Residue E129 is the Nucleophile of the active site.

This sequence belongs to the flavokinase family. It depends on Zn(2+) as a cofactor. Requires Mg(2+) as cofactor.

It catalyses the reaction riboflavin + ATP = FMN + ADP + H(+). The protein operates within cofactor biosynthesis; FMN biosynthesis; FMN from riboflavin (ATP route): step 1/1. In terms of biological role, catalyzes the phosphorylation of riboflavin (vitamin B2) to form flavin mononucleotide (FMN) coenzyme. This chain is Riboflavin kinase (FMN1), found in Yarrowia lipolytica (strain CLIB 122 / E 150) (Yeast).